The sequence spans 210 residues: Vacuolar protein sorting-associated protein 28 homolog 2 (210 aa).

Positions 1 to 99 constitute a VPS28 N-terminal domain; it reads MMEVKLWNDK…VTSGLPATVE (99 aa). Positions 109 to 205 constitute a VPS28 C-terminal domain; the sequence is SNSASIVAEC…SSYNSFMAAL (97 aa).

It belongs to the VPS28 family. Component of the endosomal sorting required for transport complex I (ESCRT-I), composed of ELC, VPS28 and VPS37. Interacts with ELC.

Its subcellular location is the endosome. Component of the ESCRT-I complex (endosomal sorting complex required for transport I), a regulator of vesicular trafficking process. Required for the sorting of endocytic ubiquitinated cargos into multivesicular bodies (MVBs). Mediates the association to the ESCRT-0 complex. This chain is Vacuolar protein sorting-associated protein 28 homolog 2 (VPS28-2), found in Arabidopsis thaliana (Mouse-ear cress).